The primary structure comprises 331 residues: Pyruvate synthase subunit PorB (331 aa).

4 residues coordinate [4Fe-4S] cluster: Cys-21, Cys-24, Cys-59, and Cys-222.

In terms of assembly, heterotetramer of one alpha, one beta, one delta and one gamma chain. [4Fe-4S] cluster serves as cofactor.

It carries out the reaction 2 oxidized [2Fe-2S]-[ferredoxin] + pyruvate + CoA = 2 reduced [2Fe-2S]-[ferredoxin] + acetyl-CoA + CO2 + H(+). This chain is Pyruvate synthase subunit PorB (porB), found in Pyrococcus horikoshii (strain ATCC 700860 / DSM 12428 / JCM 9974 / NBRC 100139 / OT-3).